A 227-amino-acid polypeptide reads, in one-letter code: Transcriptional regulatory protein TdiR (227 aa).

Positions 11–125 (TVFVVDDEAS…DLLDAVNAAL (115 aa)) constitute a Response regulatory domain. Asp-60 carries the 4-aspartylphosphate modification. One can recognise an HTH luxR-type domain in the interval 141-206 (HLDLLATLSQ…DLMHFVMRGS (66 aa)). Residues 165–184 (SKEIAKLLGISYKTVEAHRG) constitute a DNA-binding region (H-T-H motif).

Phosphorylated by TdiS.

Functionally, member of the two-component regulatory system TdiR/TdiS, which probably regulates transcription of toluene catabolic genes (bss operon). Binds to DNA. In Thauera aromatica, this protein is Transcriptional regulatory protein TdiR (tdiR).